The chain runs to 550 residues: Methionine--tRNA ligase (550 aa).

Residues Pro-13 to His-23 carry the 'HIGH' region motif. Zn(2+)-binding residues include Cys-145, Cys-148, Cys-158, and Cys-161. A 'KMSKS' region motif is present at residues Gln-331–Ser-335. Lys-334 provides a ligand contact to ATP.

Belongs to the class-I aminoacyl-tRNA synthetase family. MetG type 1 subfamily. In terms of assembly, monomer. It depends on Zn(2+) as a cofactor.

The protein resides in the cytoplasm. It catalyses the reaction tRNA(Met) + L-methionine + ATP = L-methionyl-tRNA(Met) + AMP + diphosphate. Is required not only for elongation of protein synthesis but also for the initiation of all mRNA translation through initiator tRNA(fMet) aminoacylation. This Chlamydia trachomatis serovar A (strain ATCC VR-571B / DSM 19440 / HAR-13) protein is Methionine--tRNA ligase.